The chain runs to 271 residues: Tryptophan synthase alpha chain (271 aa).

Residues E53 and D64 each act as proton acceptor in the active site.

Belongs to the TrpA family. Tetramer of two alpha and two beta chains.

It carries out the reaction (1S,2R)-1-C-(indol-3-yl)glycerol 3-phosphate + L-serine = D-glyceraldehyde 3-phosphate + L-tryptophan + H2O. It functions in the pathway amino-acid biosynthesis; L-tryptophan biosynthesis; L-tryptophan from chorismate: step 5/5. The alpha subunit is responsible for the aldol cleavage of indoleglycerol phosphate to indole and glyceraldehyde 3-phosphate. This Streptomyces coelicolor (strain ATCC BAA-471 / A3(2) / M145) protein is Tryptophan synthase alpha chain.